Consider the following 652-residue polypeptide: Acetyl-coenzyme A synthetase (652 aa).

Residues 191 to 194 (RAGR), T311, and N335 contribute to the CoA site. ATP is bound by residues 387-389 (GEP), 411-416 (DTWWQT), D500, and R515. A CoA-binding site is contributed by S523. R526 is a binding site for ATP. Residues V537, H539, and I542 each coordinate Mg(2+). R584 serves as a coordination point for CoA. K609 carries the N6-acetyllysine modification.

Belongs to the ATP-dependent AMP-binding enzyme family. It depends on Mg(2+) as a cofactor. Post-translationally, acetylated. Deacetylation by the SIR2-homolog deacetylase activates the enzyme.

The catalysed reaction is acetate + ATP + CoA = acetyl-CoA + AMP + diphosphate. Its function is as follows. Catalyzes the conversion of acetate into acetyl-CoA (AcCoA), an essential intermediate at the junction of anabolic and catabolic pathways. Acs undergoes a two-step reaction. In the first half reaction, Acs combines acetate with ATP to form acetyl-adenylate (AcAMP) intermediate. In the second half reaction, it can then transfer the acetyl group from AcAMP to the sulfhydryl group of CoA, forming the product AcCoA. Enables the cell to use acetate during aerobic growth to generate energy via the TCA cycle, and biosynthetic compounds via the glyoxylate shunt. Acetylates CheY, the response regulator involved in flagellar movement and chemotaxis. The sequence is that of Acetyl-coenzyme A synthetase from Yersinia pseudotuberculosis serotype I (strain IP32953).